The primary structure comprises 310 residues: MKHSYRADEPLWLNYTEAISKTWDIDPTYNAIHGAMKDMGEAKTHRVLAGMALYYHLGFSCQLAEQSTDENFWDVLGNNYEGTKRGTERRYFRGEQGRASLKYIKDNYKTPTDFLLGLHRDKYSDLLKAFGPVPAFGPYFVWKMGDIYDRILGMPIQADNCIEHLPSEPFKGMELVRKEMIARGDASFADYTPQQMFEYMESQTNKLGLIAPPAGDRLLDIREIETAMCGLKHFYTGTDYVGKDLVKHSESLLGYGETADLLRSHMPPVIARDYFMAPASVIKLHGPNRKIDEEGSNPIVKTTGLGSFFR.

Belongs to the thymidine aminotransferase family.

It carries out the reaction 5-phosphomethyl-dUMP in DNA + putrescine = 5-N(alpha)-putrescinyl-dTMP in DNA + phosphate. Functionally, transfers putrescine to 5-phosphomethyl-2'-deoxyuridine (5-PmdU) to produce 5-Nalpha-putrescinylthymidine (Nalpha-PutT) as a step in the pathway leading to thymidine hypermodifications in the viral genome. As a final result of the pathway of hypermodification, Nalpha-PutT substitutes for about 50% of thymidines in the viral DNA. These modifications probably prevent degradation of viral genome by the host restriction-modification antiviral defense system. This Delftia phage PhiW-14 (Deftia acidovorans bacteriophage phiW-14) protein is Putrescinyltransferase.